Consider the following 259-residue polypeptide: Bidirectional sugar transporter SWEET4 (259 aa).

Over 1 to 10 (MVSPDTIRTA) the chain is Extracellular. Residues 10–94 (AIGVVGNGTA…TYIALFLAFS (85 aa)) form the MtN3/slv 1 domain. The helical transmembrane segment at 11 to 31 (IGVVGNGTALVLFLSPVPTFI) threads the bilayer. Topologically, residues 32-44 (RIWKKGSVEQYSA) are cytoplasmic. The helical transmembrane segment at 45 to 65 (VPYVATLLNCMMWVLYGLPAV) threads the bilayer. Residues 66–77 (HPHSMLVITING) lie on the Extracellular side of the membrane. N-linked (GlcNAc...) asparagine glycosylation is present at Asn-76. The chain crosses the membrane as a helical span at residues 78 to 98 (TGMAIELTYIALFLAFSLGAV). Topologically, residues 99-101 (RRR) are cytoplasmic. Residues 102–122 (VLLLLAAEVAFVAAVAALVLN) traverse the membrane as a helical segment. The Extracellular segment spans residues 123–131 (LAHTHERRS). The chain crosses the membrane as a helical span at residues 132-152 (MIVGILCVLFGTGMYAAPLSV). A MtN3/slv 2 domain is found at 133-217 (IVGILCVLFG…ILYAIYYKST (85 aa)). At 153–165 (MKMVIQTKSVEYM) the chain is on the cytoplasmic side. A helical transmembrane segment spans residues 166–186 (PLFLSLASLVNGICWTAYALI). The Extracellular segment spans residues 187 to 191 (RFDLY). Residues 192-212 (ITIPNGLGVMFAVAQLILYAI) traverse the membrane as a helical segment. The Cytoplasmic portion of the chain corresponds to 213-259 (YYKSTQQIIEARKRKEADHVAMTDVVVDSAKNNPSSGAAAAAANGRY).

This sequence belongs to the SWEET sugar transporter family. Forms homooligomers and/or heterooligomers.

Its subcellular location is the cell membrane. Functionally, mediates both low-affinity uptake and efflux of sugar across the plasma membrane. This is Bidirectional sugar transporter SWEET4 (SWEET4) from Oryza sativa subsp. indica (Rice).